The primary structure comprises 132 residues: MKFRIGELADKCGVNKETIRYYERLGLIPEPERTEKGYRMYSQQTVDRLHFIKRMQELGFTLNEIDKLLGVVDRDEAKCRDMYDFTILKIEDIQRKIEDLKRIERMLMDLKERCPENKDIYECPIIETLMKK.

The HTH merR-type domain occupies 2 to 71; the sequence is KFRIGELADK…LNEIDKLLGV (70 aa). The segment at residues 5-24 is a DNA-binding region (H-T-H motif); it reads IGELADKCGVNKETIRYYER. The Hg(2+) site is built by cysteine 79, cysteine 114, and cysteine 123.

In terms of assembly, homodimer.

Its function is as follows. Mediates the mercuric-dependent induction of mercury resistance operon. In the absence of mercury MerR represses transcription by binding tightly to the mer operator region; when mercury is present the dimeric complex binds a single ion and becomes a potent transcriptional activator, while remaining bound to the mer site. In Bacillus cereus, this protein is Mercuric resistance operon regulatory protein (merR1).